The following is a 217-amino-acid chain: Adenylate kinase (217 aa).

Residue 10-15 (GIGKGT) coordinates ATP. The tract at residues 30-59 (ATGDIFRKNFQENTPLGKESKKFINKGLLV) is NMP. Residues Thr31, Arg36, 57-59 (LLV), 85-88 (GFPR), and Gln92 each bind AMP. The LID stretch occupies residues 126 to 163 (GRRICSHCGKVYHLDNLPPKIEGICDKDQKKLIQREDD). Arg127 lines the ATP pocket. Cys130 and Cys133 together coordinate Zn(2+). 136 to 137 (VY) serves as a coordination point for ATP. Positions 150 and 153 each coordinate Zn(2+). Arg160 and Arg171 together coordinate AMP. Gln199 provides a ligand contact to ATP.

The protein belongs to the adenylate kinase family. In terms of assembly, monomer.

The protein resides in the cytoplasm. The catalysed reaction is AMP + ATP = 2 ADP. It functions in the pathway purine metabolism; AMP biosynthesis via salvage pathway; AMP from ADP: step 1/1. Catalyzes the reversible transfer of the terminal phosphate group between ATP and AMP. Plays an important role in cellular energy homeostasis and in adenine nucleotide metabolism. In Phytoplasma australiense, this protein is Adenylate kinase.